The primary structure comprises 199 residues: Potassium-transporting ATPase KdpC subunit (199 aa).

Residues Pro-7–Ile-27 traverse the membrane as a helical segment.

It belongs to the KdpC family. In terms of assembly, the system is composed of three essential subunits: KdpA, KdpB and KdpC.

The protein resides in the cell inner membrane. Part of the high-affinity ATP-driven potassium transport (or Kdp) system, which catalyzes the hydrolysis of ATP coupled with the electrogenic transport of potassium into the cytoplasm. This subunit acts as a catalytic chaperone that increases the ATP-binding affinity of the ATP-hydrolyzing subunit KdpB by the formation of a transient KdpB/KdpC/ATP ternary complex. The polypeptide is Potassium-transporting ATPase KdpC subunit (Gemmatimonas aurantiaca (strain DSM 14586 / JCM 11422 / NBRC 100505 / T-27)).